The primary structure comprises 370 residues: ADP-ribosylation factor-like protein 13B (370 aa).

4 S-palmitoyl cysteine lipidation sites follow: cysteine 12, cysteine 13, cysteine 14, and cysteine 15. Residues 31–38 (GIGSAGKT), 75–79 (DVGGD), and 134–137 (NNQN) each bind GTP. Lysine 239 participates in a covalent cross-link: Glycyl lysine isopeptide (Lys-Gly) (interchain with G-Cter in SUMO). The interval 255-331 (RNQPPVQPPI…PVSPESNSVK (77 aa)) is disordered. The segment covering 259 to 271 (PVQPPIPPDPPSD) has biased composition (pro residues). Polar residues-rich tracts occupy residues 287 to 303 (LASS…TPET) and 314 to 328 (RISQ…PESN). Lysine 331 is covalently cross-linked (Glycyl lysine isopeptide (Lys-Gly) (interchain with G-Cter in SUMO)). An RVVP region region spans residues 366–369 (RVVP).

The protein belongs to the small GTPase superfamily. Arf family. As to quaternary structure, monomer. In terms of processing, sumoylation regulates the targeting of membrane sensory receptors to the cilium. Specifically expressed in ciliated sensory neurons throughout development in both hermaphrodites.

It is found in the cell projection. Its subcellular location is the cilium membrane. Its function is as follows. Cilium-specific protein required to control the microtubule-based, ciliary axoneme structure. Required for normal sensory cilium function. May act by maintaining the association between IFT subcomplexes A and B. This is ADP-ribosylation factor-like protein 13B (arl-13) from Caenorhabditis elegans.